The primary structure comprises 465 residues: uncharacterized protein (465 aa).

Residues 87–112 show a composition bias toward polar residues; the sequence is KTSQQIDSSPPQTPTTSNGSMMTRRQ. 2 disordered regions span residues 87–169 and 201–244; these read KTSQ…SYDD and EGYI…NNIF. Low complexity predominate over residues 113 to 139; it reads NANNAISSNNNTNTNVTNGSSSNTSLN. The span at 141–157 shows a compositional bias: acidic residues; sequence GDEEQEEEEEEENDEDS. Residues 217 to 244 are compositionally biased toward low complexity; it reads NRNNNNNNINKNNNNNINNNNNNNNNIF.

This is an uncharacterized protein from Dictyostelium discoideum (Social amoeba).